The chain runs to 154 residues: UPF0178 protein YaiI (154 aa).

Belongs to the UPF0178 family.

The sequence is that of UPF0178 protein YaiI from Escherichia coli (strain ATCC 8739 / DSM 1576 / NBRC 3972 / NCIMB 8545 / WDCM 00012 / Crooks).